The sequence spans 1353 residues: Protein prickle (1353 aa).

3 disordered regions span residues 130–206 (VDDG…TKRN), 266–292 (QEEE…PPLP), and 500–540 (AKYS…SAHA). The span at 147–165 (TPTATATAGRPLFPLSSSP) shows a compositional bias: low complexity. A compositionally biased stretch (basic residues) spans 166-178 (RRSKKLLRSLRAH). Residues 179 to 189 (VKGESRPEKPA) are compositionally biased toward basic and acidic residues. The span at 514–532 (LSPALSTPSPPSLLHHPAA) shows a compositional bias: low complexity. Residues 548 to 656 (MDMQRQSHSD…NVRQLMSARP (109 aa)) form the PET domain. 3 LIM zinc-binding domains span residues 655 to 719 (RPCD…ETLK), 720 to 780 (PRCS…MFAE), and 781 to 843 (YCDY…GEPP). Disordered regions lie at residues 840–892 (GEPP…HQAS), 933–962 (HCRS…NMSP), and 1062–1303 (ADIM…SSSS). Over residues 861–892 (TQRVRPQTRITSSHASSSPPMSPQQQQQHQAS) the composition is skewed to low complexity. Composition is skewed to polar residues over residues 952 to 962 (RASSTSHNMSP) and 1111 to 1120 (SLNTPLSAHS). Low complexity predominate over residues 1130 to 1142 (SILSGASSSSPMS). Positions 1177-1205 (GDKDRDRDRERDRDRDRDKGGDKDRESGR) are enriched in basic and acidic residues. Basic residues-rich tracts occupy residues 1207–1220 (GPGH…RRKS) and 1228–1240 (NHHR…RSHS). The span at 1269–1284 (ETAHKSPRQQRERERE) shows a compositional bias: basic and acidic residues.

The protein belongs to the prickle / espinas / testin family. In terms of assembly, interacts with dsh; PET and LIM domains interact with dsh DEP domain, in wing cells. Interacts with Vang in photoreceptor cells.

Its subcellular location is the cell membrane. In terms of biological role, acts in a planar cell polarity (PCP) complex; polarization along the apical/basal axis of epithelial cells. PCP signaling in the wing disk requires the receptor fz and the cytoplasmic proteins dsh and pk. These act in a feedback loop leading to activation of the jnk cascade and subsequent polarized arrangement of hairs and bristles. Dgo and pk compete with one another for dsh binding, thereby modulating fz dsh activity and ensuring tight control over fz PCP signaling. Vang, stan and pk function together to regulate the establishment of tissue polarity in the adult eye. The polypeptide is Protein prickle (Drosophila pseudoobscura pseudoobscura (Fruit fly)).